The chain runs to 88 residues: UPF0297 protein EAT1b_2723 (88 aa).

Belongs to the UPF0297 family.

In Exiguobacterium sp. (strain ATCC BAA-1283 / AT1b), this protein is UPF0297 protein EAT1b_2723.